Consider the following 302-residue polypeptide: Sulfate adenylyltransferase subunit 2 (302 aa).

Residues 280–302 are disordered; that stretch reads RQGRLIDSDQSASMEQKKRQGYF.

Belongs to the PAPS reductase family. CysD subfamily. In terms of assembly, heterodimer composed of CysD, the smaller subunit, and CysN.

It carries out the reaction sulfate + ATP + H(+) = adenosine 5'-phosphosulfate + diphosphate. The protein operates within sulfur metabolism; hydrogen sulfide biosynthesis; sulfite from sulfate: step 1/3. With CysN forms the ATP sulfurylase (ATPS) that catalyzes the adenylation of sulfate producing adenosine 5'-phosphosulfate (APS) and diphosphate, the first enzymatic step in sulfur assimilation pathway. APS synthesis involves the formation of a high-energy phosphoric-sulfuric acid anhydride bond driven by GTP hydrolysis by CysN coupled to ATP hydrolysis by CysD. This is Sulfate adenylyltransferase subunit 2 from Shewanella baltica (strain OS185).